We begin with the raw amino-acid sequence, 407 residues long: uncharacterized protein (407 aa).

2 coiled-coil regions span residues threonine 96 to glutamate 130 and methionine 287 to serine 345. Basic and acidic residues predominate over residues glutamate 302–lysine 317. Positions glutamate 302 to aspartate 394 are disordered. A compositionally biased stretch (basic residues) spans isoleucine 318–lysine 331. A compositionally biased stretch (low complexity) spans threonine 344–serine 370.

This is an uncharacterized protein from Acanthamoeba polyphaga (Amoeba).